The chain runs to 440 residues: Phosphatidylcholine-sterol acyltransferase (440 aa).

The signal sequence occupies residues 1 to 24 (MGPPGSPWQWVTLLLGLLLPPAAP). Asn-44 is a glycosylation site (N-linked (GlcNAc...) (complex) asparagine). A disulfide bond links Cys-74 and Cys-98. The N-linked (GlcNAc...) (complex) asparagine glycan is linked to Asn-108. Ser-205 functions as the Nucleophile in the catalytic mechanism. Asn-296 carries an N-linked (GlcNAc...) (complex) asparagine glycan. Cys-337 and Cys-380 form a disulfide bridge. Catalysis depends on charge relay system residues Asp-369 and His-401. The N-linked (GlcNAc...) (complex) asparagine glycan is linked to Asn-408. O-linked (GalNAc...) threonine glycosylation is present at Thr-431. Ser-433 carries O-linked (GalNAc...) serine glycosylation.

This sequence belongs to the AB hydrolase superfamily. Lipase family. In terms of processing, O- and N-glycosylated. O-glycosylation on Thr-431 and Ser-433 consists of sialylated galactose beta 1--&gt;3N-acetylgalactosamine structures. N-glycosylated sites contain sialylated triantennary and/or biantennary complex structures. In terms of tissue distribution, detected in blood plasma. Detected in cerebral spinal fluid (at protein level). Detected in liver. Expressed mainly in brain, liver and testes.

It is found in the secreted. The catalysed reaction is a sterol + a 1,2-diacyl-sn-glycero-3-phosphocholine = a sterol ester + a 1-acyl-sn-glycero-3-phosphocholine. It catalyses the reaction a 1-O-alkyl-2-acetyl-sn-glycero-3-phosphocholine + H2O = a 1-O-alkyl-sn-glycero-3-phosphocholine + acetate + H(+). It carries out the reaction a 1-hexadecanoyl-2-acyl-sn-glycero-3-phosphocholine + (24S)-hydroxycholesterol = (24S)-24-hydroxycholesterol ester + 1-hexadecanoyl-sn-glycero-3-phosphocholine. The enzyme catalyses (24S)-hydroxycholesterol + 1-hexadecanoyl-2-(9Z,12Z-octadecadienoyl)-sn-glycero-3-phosphocholine = (24S)-hydroxycholesterol 3-linoleoate + 1-hexadecanoyl-sn-glycero-3-phosphocholine. The catalysed reaction is 1-hexadecanoyl-2-(5Z,8Z,11Z,14Z-eicosatetraenoyl)-sn-glycero-3-phosphocholine + cholesterol = cholesteryl (5Z,8Z,11Z,14Z)-eicosatetraenoate + 1-hexadecanoyl-sn-glycero-3-phosphocholine. It catalyses the reaction 1-hexadecanoyl-2-(9Z-octadecenoyl)-sn-glycero-3-phosphocholine + cholesterol = cholesteryl (9Z-octadecenoate) + 1-hexadecanoyl-sn-glycero-3-phosphocholine. It carries out the reaction 1-hexadecanoyl-2-(8Z,11Z,14Z-eicosatrienoyl)-sn-glycero-3-phosphocholine + cholesterol = cholesteryl (8Z,11Z,14Z)-eicosatrienoate + 1-hexadecanoyl-sn-glycero-3-phosphocholine. The enzyme catalyses 1-hexadecanoyl-2-(5Z,8Z,11Z-eicosatrienoyl)-sn-glycero-3-phosphocholine + cholesterol = cholesteryl (5Z,8Z,11Z)-eicosatrienoate + 1-hexadecanoyl-sn-glycero-3-phosphocholine. The catalysed reaction is 1-hexadecanoyl-2-(5Z,8Z,11Z,14Z,17Z-eicosapentaenoyl)-sn-glycero-3-phosphocholine + cholesterol = (5Z,8Z,11Z,14Z,17Z-eicosapentaenoyl)-cholesterol + 1-hexadecanoyl-sn-glycero-3-phosphocholine. It catalyses the reaction 1-hexadecanoyl-2-(9Z,12Z-octadecadienoyl)-sn-glycero-3-phosphocholine + cholesterol = cholesteryl (9Z,12Z)-octadecadienoate + 1-hexadecanoyl-sn-glycero-3-phosphocholine. It carries out the reaction 1-hexadecanoyl-2-(6Z,9Z,12Z-octadecatrienoyl)-sn-glycero-3-phosphocholine + cholesterol = (6Z,9Z,12Z-octadecatrienoyl)-cholesterol + 1-hexadecanoyl-sn-glycero-3-phosphocholine. The enzyme catalyses 1-hexadecanoyl-2-(11Z,14Z,17Z-eicosatrienoyl)-sn-glycero-3-phosphocholine + cholesterol = (11Z,14Z,17Z-eicosatrienoyl)-cholesterol + 1-hexadecanoyl-sn-glycero-3-phosphocholine. The catalysed reaction is 1-hexadecanoyl-2-(9Z,12Z,15Z-octadecatrienoyl)-sn-glycero-3-phosphocholine + cholesterol = (9Z,12Z,15Z-octadecatrienoyl)-cholesterol + 1-hexadecanoyl-sn-glycero-3-phosphocholine. It catalyses the reaction 1-hexadecanoyl-2-(9Z,12Z-octadecadienoyl)-sn-glycero-3-phosphocholine + H2O = (9Z,12Z)-octadecadienoate + 1-hexadecanoyl-sn-glycero-3-phosphocholine + H(+). It carries out the reaction 1-hexadecanoyl-2-(5Z,8Z,11Z,14Z-eicosatetraenoyl)-sn-glycero-3-phosphocholine + H2O = 1-hexadecanoyl-sn-glycero-3-phosphocholine + (5Z,8Z,11Z,14Z)-eicosatetraenoate + H(+). The enzyme catalyses a 1-O-alkyl-2-acetyl-sn-glycero-3-phosphocholine + 1-hexadecanoyl-sn-glycero-3-phosphocholine = 1-hexadecanoyl-2-acetyl-sn-glycero-3-phosphocholine + a 1-O-alkyl-sn-glycero-3-phosphocholine. Its activity is regulated as follows. APOA1 is the most potent activator in plasma. Also activated by APOE, APOC1 and APOA4. Inhibited by haptoglobin and 5,5'-dithiobis-(2-nitrobenzoic acid) (DTNB). Functionally, central enzyme in the extracellular metabolism of plasma lipoproteins. Synthesized mainly in the liver and secreted into plasma where it converts cholesterol and phosphatidylcholines (lecithins) to cholesteryl esters and lysophosphatidylcholines on the surface of high and low density lipoproteins (HDLs and LDLs). The cholesterol ester is then transported back to the liver. Has a preference for plasma 16:0-18:2 or 18:O-18:2 phosphatidylcholines. Also produced in the brain by primary astrocytes, and esterifies free cholesterol on nascent APOE-containing lipoproteins secreted from glia and influences cerebral spinal fluid (CSF) APOE- and APOA1 levels. Together with APOE and the cholesterol transporter ABCA1, plays a key role in the maturation of glial-derived, nascent lipoproteins. Required for remodeling high-density lipoprotein particles into their spherical forms. Catalyzes the hydrolysis of 1-O-alkyl-2-acetyl-sn-glycero-3-phosphocholine (platelet-activating factor or PAF) to 1-O-alkyl-sn-glycero-3-phosphocholine (lyso-PAF). Also catalyzes the transfer of the acetate group from PAF to 1-hexadecanoyl-sn-glycero-3-phosphocholine forming lyso-PAF. Catalyzes the esterification of (24S)-hydroxycholesterol (24(S)OH-C), also known as cerebrosterol to produce 24(S)OH-C monoesters. The protein is Phosphatidylcholine-sterol acyltransferase (LCAT) of Homo sapiens (Human).